The following is a 135-amino-acid chain: Large ribosomal subunit protein uL22c (135 aa).

It belongs to the universal ribosomal protein uL22 family. Part of the 50S ribosomal subunit.

It is found in the plastid. Functionally, this protein binds specifically to 23S rRNA. The globular domain of the protein is located near the polypeptide exit tunnel on the outside of the subunit, while an extended beta-hairpin is found that lines the wall of the exit tunnel in the center of the 70S ribosome. The protein is Large ribosomal subunit protein uL22c (rpl22) of Cuscuta reflexa (Southern Asian dodder).